The following is a 203-amino-acid chain: Ribonuclease HII (203 aa).

An RNase H type-2 domain is found at 18 to 203; that stretch reads GQYAGVDEVG…SFRPVREALA (186 aa). A divalent metal cation is bound by residues D24, E25, and D116.

This sequence belongs to the RNase HII family. Mn(2+) is required as a cofactor. Mg(2+) serves as cofactor.

It is found in the cytoplasm. It carries out the reaction Endonucleolytic cleavage to 5'-phosphomonoester.. In terms of biological role, endonuclease that specifically degrades the RNA of RNA-DNA hybrids. The chain is Ribonuclease HII from Shewanella pealeana (strain ATCC 700345 / ANG-SQ1).